The primary structure comprises 476 residues: H2.0-like homeobox protein (476 aa).

Disordered regions lie at residues Gln120–Lys169, Trp328–Thr401, and Thr413–Leu476. Composition is skewed to low complexity over residues Pro123–Gln134 and His158–Ser168. The segment at residues Arg273–Lys332 is a DNA-binding region (homeobox). Basic and acidic residues-rich tracts occupy residues Ser331–Glu346 and Glu355–Gly368. Residues Glu369–Ser379 show a composition bias toward acidic residues. Basic and acidic residues predominate over residues Asp386–Leu397. A compositionally biased stretch (low complexity) spans Thr413–Gly434. Composition is skewed to polar residues over residues Asn435–Gly446 and His455–Glu467.

The protein belongs to the H2.0 homeobox family. Expressed in Th1 cells, CD8-positive T-cells, B-cells and NK cells.

The protein resides in the nucleus. Its function is as follows. Transcription factor required for TBX21/T-bet-dependent maturation of Th1 cells as well as maintenance of Th1-specific gene expression. Involved in embryogenesis and hematopoiesis. The polypeptide is H2.0-like homeobox protein (Hlx) (Mus musculus (Mouse)).